Reading from the N-terminus, the 225-residue chain is MSANELPASAQSLQEQFLGSFVTRKLLLHDPFDHNSLRVFAVAPSPLITHENNLKGNVLMLLSVLICGIICCLGLHYIIRCAFRRSSRFMISEPISSLSTPRSSSNKGIKKKALRMFPVVSYSREMNLPGIGEECVICLSDFVSGEQLRLLPKCNHGFHVRCIDKWLQHHLTCPKCRHCLVETCQKILGDFSQADSMASTPTESVIVRIDPLEPEGRVNTFRESS.

A helical transmembrane segment spans residues 59 to 79; sequence LMLLSVLICGIICCLGLHYII. An RING-type; atypical zinc finger spans residues 135–177; the sequence is CVICLSDFVSGEQLRLLPKCNHGFHVRCIDKWLQHHLTCPKCR.

Belongs to the RING-type zinc finger family. ATL subfamily.

It localises to the membrane. The catalysed reaction is S-ubiquitinyl-[E2 ubiquitin-conjugating enzyme]-L-cysteine + [acceptor protein]-L-lysine = [E2 ubiquitin-conjugating enzyme]-L-cysteine + N(6)-ubiquitinyl-[acceptor protein]-L-lysine.. It participates in protein modification; protein ubiquitination. Its function is as follows. E3 ubiquitin-protein ligase able to catalyze polyubiquitination with ubiquitin-conjugating enzyme E2 UBC8 in vitro. The chain is E3 ubiquitin-protein ligase ATL76 (ATL76) from Arabidopsis thaliana (Mouse-ear cress).